A 252-amino-acid chain; its full sequence is Imidazole glycerol phosphate synthase subunit HisF (252 aa).

Active-site residues include Asp11 and Asp130.

The protein belongs to the HisA/HisF family. As to quaternary structure, heterodimer of HisH and HisF.

It localises to the cytoplasm. It carries out the reaction 5-[(5-phospho-1-deoxy-D-ribulos-1-ylimino)methylamino]-1-(5-phospho-beta-D-ribosyl)imidazole-4-carboxamide + L-glutamine = D-erythro-1-(imidazol-4-yl)glycerol 3-phosphate + 5-amino-1-(5-phospho-beta-D-ribosyl)imidazole-4-carboxamide + L-glutamate + H(+). The protein operates within amino-acid biosynthesis; L-histidine biosynthesis; L-histidine from 5-phospho-alpha-D-ribose 1-diphosphate: step 5/9. Functionally, IGPS catalyzes the conversion of PRFAR and glutamine to IGP, AICAR and glutamate. The HisF subunit catalyzes the cyclization activity that produces IGP and AICAR from PRFAR using the ammonia provided by the HisH subunit. The protein is Imidazole glycerol phosphate synthase subunit HisF of Citrifermentans bemidjiense (strain ATCC BAA-1014 / DSM 16622 / JCM 12645 / Bem) (Geobacter bemidjiensis).